The chain runs to 1069 residues: Regulator of nonsense transcripts 1 (1069 aa).

Positions 1-86 (MDDSDDEYSR…SEKSLTEEQH (86 aa)) are disordered. The span at 28 to 50 (IGNTQDSQFAYEQFSVPTQSSQA) shows a compositional bias: polar residues. Over residues 51–65 (TDLLPGGTDGTTNDL) the composition is skewed to low complexity. Basic and acidic residues predominate over residues 77–86 (SEKSLTEEQH). One can recognise a Upf1 CH-rich domain in the interval 87-244 (EQKLPEHACR…VRMEELWRDH (158 aa)). Residues Cys-95, Cys-98, Cys-109, Cys-112, Cys-117, His-127, His-131, His-137, Cys-155, Cys-158, Cys-181, and Cys-185 each contribute to the Zn(2+) site. Positions 95–127 (CRYCGISDPLCVAKCTVCRKWFCNSNDGTSGGH) are C3H. Residues 109-137 (CTVCRKWFCNSNDGTSGGHIVHHMVRSQH) form a CC/SHH/C region. The C4 stretch occupies residues 155-185 (CYRCGSKNVFNLGFIPGKKDQVVVIICRTPC). Residues Gln-450, 467 to 474 (GPPGTGKT), Gln-639, Tyr-676, and Glu-807 each bind ATP. The interval 966–1069 (ARNQKDRRRG…MDDLLFSQDC (104 aa)) is disordered. Positions 991-1013 (SQGMMSQQSQQYPPQGASSQSQY) are enriched in low complexity.

The protein belongs to the DNA2/NAM7 helicase family. In terms of processing, phosphorylated probably by smg-1. Smg-3 and smg-4 are required for phosphorylation.

The protein localises to the cytoplasm. It carries out the reaction ATP + H2O = ADP + phosphate + H(+). Functionally, RNA-dependent helicase required for nonsense-mediated decay (NMD) of aberrant mRNAs containing premature stop codons and modulates the expression level of normal mRNAs. Is recruited to mRNAs upon translation termination and undergoes a cycle of phosphorylation and dephosphorylation; its phosphorylation appears to be a key step in NMD. The formation of an smg-2-3-4 surveillance complex is believed to activate NMD. In Caenorhabditis elegans, this protein is Regulator of nonsense transcripts 1 (smg-2).